Reading from the N-terminus, the 236-residue chain is Leucyl/phenylalanyl-tRNA--protein transferase (236 aa).

This sequence belongs to the L/F-transferase family.

The protein localises to the cytoplasm. The catalysed reaction is N-terminal L-lysyl-[protein] + L-leucyl-tRNA(Leu) = N-terminal L-leucyl-L-lysyl-[protein] + tRNA(Leu) + H(+). The enzyme catalyses N-terminal L-arginyl-[protein] + L-leucyl-tRNA(Leu) = N-terminal L-leucyl-L-arginyl-[protein] + tRNA(Leu) + H(+). It catalyses the reaction L-phenylalanyl-tRNA(Phe) + an N-terminal L-alpha-aminoacyl-[protein] = an N-terminal L-phenylalanyl-L-alpha-aminoacyl-[protein] + tRNA(Phe). In terms of biological role, functions in the N-end rule pathway of protein degradation where it conjugates Leu, Phe and, less efficiently, Met from aminoacyl-tRNAs to the N-termini of proteins containing an N-terminal arginine or lysine. The chain is Leucyl/phenylalanyl-tRNA--protein transferase from Shewanella sp. (strain MR-4).